The primary structure comprises 219 residues: Membrin-12 (219 aa).

Position 2 is an N-acetylalanine (A2). Over 2–197 (ASGTVGGLSE…LIERRNRVDT (196 aa)) the chain is Cytoplasmic. Residues 198–215 (WIKYAGMIATLVILYLFI) traverse the membrane as a helical; Anchor for type IV membrane protein segment. Residues 216–219 (RWTR) are Vesicular-facing.

Belongs to the GOSR2 family.

Its subcellular location is the golgi apparatus membrane. Functionally, involved in transport of proteins from the cis/medial-Golgi to the trans-Golgi network. The chain is Membrin-12 (MEMB12) from Arabidopsis thaliana (Mouse-ear cress).